The following is an 83-amino-acid chain: Cytochrome b559 subunit alpha (83 aa).

Residues 21 to 35 (IIHSITIPSLFIAGW) form a helical membrane-spanning segment. Position 23 (histidine 23) interacts with heme.

It belongs to the PsbE/PsbF family. As to quaternary structure, heterodimer of an alpha subunit and a beta subunit. PSII is composed of 1 copy each of membrane proteins PsbA, PsbB, PsbC, PsbD, PsbE, PsbF, PsbH, PsbI, PsbJ, PsbK, PsbL, PsbM, PsbT, PsbX, PsbY, PsbZ, Psb30/Ycf12, at least 3 peripheral proteins of the oxygen-evolving complex and a large number of cofactors. It forms dimeric complexes. Requires heme b as cofactor.

It localises to the plastid. The protein localises to the chloroplast thylakoid membrane. Functionally, this b-type cytochrome is tightly associated with the reaction center of photosystem II (PSII). PSII is a light-driven water:plastoquinone oxidoreductase that uses light energy to abstract electrons from H(2)O, generating O(2) and a proton gradient subsequently used for ATP formation. It consists of a core antenna complex that captures photons, and an electron transfer chain that converts photonic excitation into a charge separation. The polypeptide is Cytochrome b559 subunit alpha (Lotus japonicus (Lotus corniculatus var. japonicus)).